The sequence spans 512 residues: 2-isopropylmalate synthase (512 aa).

In terms of domain architecture, Pyruvate carboxyltransferase spans 4-266 (IQFFDTTLRD…ETNIVLNQFK (263 aa)). Mn(2+) is bound by residues Asp-13, His-201, His-203, and Asn-237. The interval 390–512 (ELKHLQVQYV…TKQVDFEEVK (123 aa)) is regulatory domain.

Belongs to the alpha-IPM synthase/homocitrate synthase family. LeuA type 1 subfamily. As to quaternary structure, homodimer. Requires Mn(2+) as cofactor.

Its subcellular location is the cytoplasm. The catalysed reaction is 3-methyl-2-oxobutanoate + acetyl-CoA + H2O = (2S)-2-isopropylmalate + CoA + H(+). The protein operates within amino-acid biosynthesis; L-leucine biosynthesis; L-leucine from 3-methyl-2-oxobutanoate: step 1/4. Catalyzes the condensation of the acetyl group of acetyl-CoA with 3-methyl-2-oxobutanoate (2-ketoisovalerate) to form 3-carboxy-3-hydroxy-4-methylpentanoate (2-isopropylmalate). This Listeria welshimeri serovar 6b (strain ATCC 35897 / DSM 20650 / CCUG 15529 / CIP 8149 / NCTC 11857 / SLCC 5334 / V8) protein is 2-isopropylmalate synthase.